Reading from the N-terminus, the 153-residue chain is Endoribonuclease YbeY (153 aa).

Zn(2+) contacts are provided by histidine 116, histidine 120, and histidine 126.

This sequence belongs to the endoribonuclease YbeY family. Zn(2+) is required as a cofactor.

It is found in the cytoplasm. In terms of biological role, single strand-specific metallo-endoribonuclease involved in late-stage 70S ribosome quality control and in maturation of the 3' terminus of the 16S rRNA. This Clavibacter michiganensis subsp. michiganensis (strain NCPPB 382) protein is Endoribonuclease YbeY.